The primary structure comprises 204 residues: RNA-free ribonuclease P (204 aa).

This sequence belongs to the HARP family.

The enzyme catalyses Endonucleolytic cleavage of RNA, removing 5'-extranucleotides from tRNA precursor.. Its function is as follows. RNA-free RNase P that catalyzes the removal of the 5'-leader sequence from pre-tRNA to produce the mature 5'-terminus. The polypeptide is RNA-free ribonuclease P (Pyrococcus abyssi (strain GE5 / Orsay)).